The following is a 401-amino-acid chain: SVP1-like protein 2 (401 aa).

2 WD repeats span residues 222-262 (AHKN…LIHE) and 267-306 (LDRALIYDMQWNGKGDKLAVVSDKFTLHIFQINEDLDKRH).

This sequence belongs to the WD repeat PROPPIN family.

The protein localises to the vacuole membrane. It localises to the cytoplasmic vesicle membrane. Involved in mitochondrial or peroxisomal functions and amino acid signaling pathways. The chain is SVP1-like protein 2 (HSV2) from Eremothecium gossypii (strain ATCC 10895 / CBS 109.51 / FGSC 9923 / NRRL Y-1056) (Yeast).